A 492-amino-acid polypeptide reads, in one-letter code: Trehalose-6-phosphate synthase (492 aa).

Arginine 25 contributes to the D-glucose 6-phosphate binding site. 45 to 46 (GG) lines the UDP-alpha-D-glucose pocket. D-glucose 6-phosphate contacts are provided by tyrosine 101 and aspartate 155. The UDP-alpha-D-glucose site is built by arginine 297 and lysine 302. A D-glucose 6-phosphate-binding site is contributed by arginine 335. 400 to 404 (LVAKE) provides a ligand contact to UDP-alpha-D-glucose.

Belongs to the glycosyltransferase 20 family. In terms of assembly, homotetramer.

It carries out the reaction ADP-alpha-D-glucose + D-glucose 6-phosphate = alpha,alpha-trehalose 6-phosphate + ADP + H(+). The enzyme catalyses CDP-alpha-D-glucose + D-glucose 6-phosphate = alpha,alpha-trehalose 6-phosphate + CDP + H(+). It catalyses the reaction GDP-alpha-D-glucose + D-glucose 6-phosphate = alpha,alpha-trehalose 6-phosphate + GDP + H(+). The catalysed reaction is TDP-alpha-D-glucose + D-glucose 6-phosphate = 5-methyl-UDP + alpha,alpha-trehalose 6-phosphate + H(+). It carries out the reaction D-glucose 6-phosphate + UDP-alpha-D-glucose = alpha,alpha-trehalose 6-phosphate + UDP + H(+). It participates in glycan biosynthesis; trehalose biosynthesis. Its function is as follows. Probably involved in the osmoprotection via the biosynthesis of trehalose and in the production of glycogen and alpha-glucan via the TreS-Pep2 branch involved in the biosynthesis of maltose-1-phosphate (M1P). Catalyzes the transfer of glucose from UDP-glucose (UDP-Glc) to D-glucose 6-phosphate (Glc-6-P) to form trehalose-6-phosphate. Probably also able to use ADP-Glc, CDP-Glc, GDP-Glc and TDP-Glc as glucosyl donors. This Mycobacterium avium (strain 104) protein is Trehalose-6-phosphate synthase.